We begin with the raw amino-acid sequence, 690 residues long: Elongation factor G (690 aa).

In terms of domain architecture, tr-type G spans 8–283 (EKYRNIGIMA…AVVDYLPSPL (276 aa)). Residues 17-24 (AHIDAGKT), 81-85 (DTPGH), and 135-138 (NKLD) each bind GTP.

It belongs to the TRAFAC class translation factor GTPase superfamily. Classic translation factor GTPase family. EF-G/EF-2 subfamily.

The protein resides in the cytoplasm. In terms of biological role, catalyzes the GTP-dependent ribosomal translocation step during translation elongation. During this step, the ribosome changes from the pre-translocational (PRE) to the post-translocational (POST) state as the newly formed A-site-bound peptidyl-tRNA and P-site-bound deacylated tRNA move to the P and E sites, respectively. Catalyzes the coordinated movement of the two tRNA molecules, the mRNA and conformational changes in the ribosome. The chain is Elongation factor G from Rhizorhabdus wittichii (strain DSM 6014 / CCUG 31198 / JCM 15750 / NBRC 105917 / EY 4224 / RW1) (Sphingomonas wittichii).